The sequence spans 32 residues: Parigidin-br1 (32 aa).

Positions 1 to 32 form a cross-link, cyclopeptide (Gly-Asp); the sequence is GGSVPCGESCVFIPCITSLAGCSCKNKVCYYD. Cystine bridges form between cysteine 6/cysteine 22, cysteine 10/cysteine 24, and cysteine 15/cysteine 29.

Post-translationally, this is a cyclic peptide. As to expression, expressed in leaves, flowers, peduncles and seeds (at protein level).

Its function is as follows. Probably participates in a plant defense mechanism. Reduces growth of and increases mortality in larvae of D.saccharalis. Kills cultured SF-9 cells of S.frugiperda probably by disrupting plasma membranes. Has hemolytic activity against human erythrocytes. Has no antibacterial activity against E.coli strain ATCC 8739 and S.aureus strain ATCC 25923. In Palicourea rigida, this protein is Parigidin-br1.